The following is a 270-amino-acid chain: Undecaprenyl-diphosphatase 1 (270 aa).

Helical transmembrane passes span 79 to 99 (NLLL…LLFS), 105 to 125 (VLFN…IILW), 155 to 175 (LALI…LFLG), 182 to 202 (TEFS…YSLI), 215 to 235 (VFAV…RALL), and 242 to 262 (SFAV…GTWW).

The protein belongs to the UppP family.

It is found in the cell inner membrane. The catalysed reaction is di-trans,octa-cis-undecaprenyl diphosphate + H2O = di-trans,octa-cis-undecaprenyl phosphate + phosphate + H(+). Its function is as follows. Catalyzes the dephosphorylation of undecaprenyl diphosphate (UPP). Confers resistance to bacitracin. In Chromobacterium violaceum (strain ATCC 12472 / DSM 30191 / JCM 1249 / CCUG 213 / NBRC 12614 / NCIMB 9131 / NCTC 9757 / MK), this protein is Undecaprenyl-diphosphatase 1.